A 191-amino-acid polypeptide reads, in one-letter code: MAAVELILLQRVEKLGQMGDLVRVKPGYARNFLLPGGRAIRATKANTERFEQQRAQLEAQNLKRREEAERIAERVSGLSVVIIRQAGESGGLYGSVSSRDIAVAITESGLSVNRQQIQLDQPIKMLGLTDVRVVLHPEVVLPVTVNVARSVEEAERQARGEAVGLAAEEAAAAAEAALIEVADEEEVEISA.

It belongs to the bacterial ribosomal protein bL9 family.

Functionally, binds to the 23S rRNA. The polypeptide is Large ribosomal subunit protein bL9 (Granulibacter bethesdensis (strain ATCC BAA-1260 / CGDNIH1)).